We begin with the raw amino-acid sequence, 377 residues long: Chaperone protein DnaJ (377 aa).

In terms of domain architecture, J spans 5–70 (DYYEVLGVSR…DKKAAYDQFG (66 aa)). The CR-type zinc-finger motif lies at 133 to 211 (GLTKELRIPT…CHGDGRVEKS (79 aa)). Cys146, Cys149, Cys163, Cys166, Cys185, Cys188, Cys199, and Cys202 together coordinate Zn(2+). CXXCXGXG motif repeat units lie at residues 146–153 (CDLCEGSG), 163–170 (CGTCHGQG), 185–192 (CPTCHGRG), and 199–206 (CSKCHGDG).

Belongs to the DnaJ family. Homodimer. Zn(2+) serves as cofactor.

It is found in the cytoplasm. Functionally, participates actively in the response to hyperosmotic and heat shock by preventing the aggregation of stress-denatured proteins and by disaggregating proteins, also in an autonomous, DnaK-independent fashion. Unfolded proteins bind initially to DnaJ; upon interaction with the DnaJ-bound protein, DnaK hydrolyzes its bound ATP, resulting in the formation of a stable complex. GrpE releases ADP from DnaK; ATP binding to DnaK triggers the release of the substrate protein, thus completing the reaction cycle. Several rounds of ATP-dependent interactions between DnaJ, DnaK and GrpE are required for fully efficient folding. Also involved, together with DnaK and GrpE, in the DNA replication of plasmids through activation of initiation proteins. This chain is Chaperone protein DnaJ, found in Shewanella baltica (strain OS195).